The following is a 405-amino-acid chain: Probable tRNA sulfurtransferase (405 aa).

The 106-residue stretch at 60 to 165 (DKIDQRLKLV…QDAIYISNQL (106 aa)) folds into the THUMP domain. ATP-binding positions include 183-184 (ML), 208-209 (HF), R265, G287, and Q296.

This sequence belongs to the ThiI family.

It localises to the cytoplasm. It carries out the reaction [ThiI sulfur-carrier protein]-S-sulfanyl-L-cysteine + a uridine in tRNA + 2 reduced [2Fe-2S]-[ferredoxin] + ATP + H(+) = [ThiI sulfur-carrier protein]-L-cysteine + a 4-thiouridine in tRNA + 2 oxidized [2Fe-2S]-[ferredoxin] + AMP + diphosphate. It catalyses the reaction [ThiS sulfur-carrier protein]-C-terminal Gly-Gly-AMP + S-sulfanyl-L-cysteinyl-[cysteine desulfurase] + AH2 = [ThiS sulfur-carrier protein]-C-terminal-Gly-aminoethanethioate + L-cysteinyl-[cysteine desulfurase] + A + AMP + 2 H(+). It functions in the pathway cofactor biosynthesis; thiamine diphosphate biosynthesis. Its function is as follows. Catalyzes the ATP-dependent transfer of a sulfur to tRNA to produce 4-thiouridine in position 8 of tRNAs, which functions as a near-UV photosensor. Also catalyzes the transfer of sulfur to the sulfur carrier protein ThiS, forming ThiS-thiocarboxylate. This is a step in the synthesis of thiazole, in the thiamine biosynthesis pathway. The sulfur is donated as persulfide by IscS. The chain is Probable tRNA sulfurtransferase from Lactobacillus gasseri (strain ATCC 33323 / DSM 20243 / BCRC 14619 / CIP 102991 / JCM 1131 / KCTC 3163 / NCIMB 11718 / NCTC 13722 / AM63).